We begin with the raw amino-acid sequence, 297 residues long: HTH-type transcriptional regulator AceR (297 aa).

Positions 1 to 60 (MNINQEQLLMFQAVMETGSFSAAARKLGKVPSAVSMSIANLEIDLNLTLFERKGREPTPT) constitute an HTH lysR-type domain. A DNA-binding region (H-T-H motif) is located at residues 20–39 (FSAAARKLGKVPSAVSMSIA).

It belongs to the LysR transcriptional regulatory family. Homodimer and homotetramer. Binding of chlorhexidine at the inducer-binding domain causes a quaternary structural change that favors interactions between dimers to form tetramers.

The protein resides in the cytoplasm. In terms of biological role, regulates the expression of the AceI transporter. Binds DNA and chlorhexidine. Binds to regulatory sites within the intergenic region between the aceI and aceR genes, and affects the interaction between RNA polymerase (RNAP) and promoter DNA both in the presence and in the absence of chlorhexidine. In the absence of chlorhexidine, prevents transcription of the aceI gene by disrupting interactions between the promoter DNA and RNAP. In the presence of chlorhexidine, activates expression of aceI. When AceR interacts with chlorhexidine, it undergoes a conformational change and the tetrameric form either releases the DNA or shifts the position of the DNA-binding region to allow RNAP to bind onto the promoter DNA to proceed with aceI transcription. The sequence is that of HTH-type transcriptional regulator AceR from Acinetobacter baumannii (strain ATCC 17978 / DSM 105126 / CIP 53.77 / LMG 1025 / NCDC KC755 / 5377).